We begin with the raw amino-acid sequence, 187 residues long: Peptidyl-tRNA hydrolase (187 aa).

His14 serves as a coordination point for tRNA. Residue His19 is the Proton acceptor of the active site. Residues Tyr62, Asn64, and Asn110 each coordinate tRNA.

Belongs to the PTH family. In terms of assembly, monomer.

It is found in the cytoplasm. It catalyses the reaction an N-acyl-L-alpha-aminoacyl-tRNA + H2O = an N-acyl-L-amino acid + a tRNA + H(+). Functionally, hydrolyzes ribosome-free peptidyl-tRNAs (with 1 or more amino acids incorporated), which drop off the ribosome during protein synthesis, or as a result of ribosome stalling. Catalyzes the release of premature peptidyl moieties from peptidyl-tRNA molecules trapped in stalled 50S ribosomal subunits, and thus maintains levels of free tRNAs and 50S ribosomes. The protein is Peptidyl-tRNA hydrolase of Chlorobaculum tepidum (strain ATCC 49652 / DSM 12025 / NBRC 103806 / TLS) (Chlorobium tepidum).